Consider the following 718-residue polypeptide: Pentatricopeptide repeat-containing protein At1g22960, mitochondrial (718 aa).

The N-terminal 11 residues, 1 to 11 (MILCLRLCLRA), are a transit peptide targeting the mitochondrion. 15 PPR repeats span residues 167 to 201 (ALKL…GFLP), 202 to 236 (SVRN…GIMP), 237 to 271 (TVIT…NIEF), 272 to 306 (SEVT…GFAV), 307 to 341 (TPYS…GIYP), 342 to 372 (TTST…MAAP), 373 to 407 (DVVS…DIHP), 408 to 442 (SIVT…LIFP), 443 to 477 (DVIT…GIKP), 478 to 512 (DGYA…DHHA), 514 to 548 (DLTI…GLVP), 549 to 583 (DHVT…RLYP), 584 to 618 (SVIT…GVRP), 619 to 653 (NVMT…GIPP), and 654 to 688 (NKYS…EIEP).

This sequence belongs to the PPR family. P subfamily.

The protein resides in the mitochondrion. This Arabidopsis thaliana (Mouse-ear cress) protein is Pentatricopeptide repeat-containing protein At1g22960, mitochondrial.